A 416-amino-acid polypeptide reads, in one-letter code: S-adenosylmethionine synthase (416 aa).

ATP is bound at residue His-16. Asp-18 serves as a coordination point for Mg(2+). Glu-44 contributes to the K(+) binding site. Residues Glu-57 and Gln-100 each coordinate L-methionine. The segment at 100–110 (QSPDISQGVTA) is flexible loop. ATP is bound by residues 175–177 (DGK), 251–252 (KF), Asp-260, 266–267 (RK), Ala-283, and Lys-287. Asp-260 contacts L-methionine. Lys-291 serves as a coordination point for L-methionine.

This sequence belongs to the AdoMet synthase family. In terms of assembly, homotetramer; dimer of dimers. Mg(2+) serves as cofactor. K(+) is required as a cofactor.

The protein resides in the cytoplasm. The catalysed reaction is L-methionine + ATP + H2O = S-adenosyl-L-methionine + phosphate + diphosphate. It participates in amino-acid biosynthesis; S-adenosyl-L-methionine biosynthesis; S-adenosyl-L-methionine from L-methionine: step 1/1. Functionally, catalyzes the formation of S-adenosylmethionine (AdoMet) from methionine and ATP. The overall synthetic reaction is composed of two sequential steps, AdoMet formation and the subsequent tripolyphosphate hydrolysis which occurs prior to release of AdoMet from the enzyme. The chain is S-adenosylmethionine synthase from Microcystis aeruginosa (strain NIES-843 / IAM M-2473).